The primary structure comprises 260 residues: Putative nudix hydrolase 6 (260 aa).

One can recognise a Nudix hydrolase domain in the interval 113-257; the sequence is PNHAADPIVS…SHFIDLLKES (145 aa). The Nudix box motif lies at 148 to 170; the sequence is GMVDAGEHVSQTLRREFAEEAMH. Positions 163 and 167 each coordinate Mg(2+).

It belongs to the Nudix hydrolase family. The cofactor is Mg(2+). Requires Mn(2+) as cofactor.

Probably mediates the hydrolysis of some nucleoside diphosphate derivatives. The polypeptide is Putative nudix hydrolase 6 (ndx-6) (Caenorhabditis elegans).